The chain runs to 331 residues: Olfactory receptor 10S1 (331 aa).

Over 1 to 38 (MTSRSVCEKMTMTTENPNQTVVSHFFLEGLRYTAKHSS) the chain is Extracellular. An N-linked (GlcNAc...) asparagine glycan is attached at N18. Residues 39 to 59 (LFFLLFLLIYSITVAGNLLIL) traverse the membrane as a helical segment. Topologically, residues 60 to 67 (LTVGSDSH) are cytoplasmic. The helical transmembrane segment at 68–88 (LSLPMYHFLGHLSFLDACLST) threads the bilayer. Topologically, residues 89–113 (VTVPKVMAGLLTLDGKVISFEGCAV) are extracellular. Residues C111 and C203 are joined by a disulfide bond. A helical transmembrane segment spans residues 114–134 (QLYCFHFLASTECFLYTVMAY). Residues 135–153 (DRYLAICQPLHYPVAMNRR) are Cytoplasmic-facing. Residues 154 to 174 (MCAEMAGITWAIGATHAAIHT) form a helical membrane-spanning segment. The Extracellular portion of the chain corresponds to 175-211 (SLTFRLLYCGPCHIAYFFCDIPPVLKLACTDTTINEL). The chain crosses the membrane as a helical span at residues 212–231 (VMLASIGIVAAGCLILIVIS). Topologically, residues 232 to 251 (YIFIVAAVLRIRTAQGRQRA) are cytoplasmic. A helical transmembrane segment spans residues 252 to 272 (FSPCTAQLTGVLLYYVPPVCI). At 273-283 (YLQPRSSEAGA) the chain is on the extracellular side. The chain crosses the membrane as a helical span at residues 284-304 (GAPAVFYTIVTPMLNPFIYTL). At 305–331 (RNKEVKHALQRLLCSSFRESTAGSPPP) the chain is on the cytoplasmic side.

It belongs to the G-protein coupled receptor 1 family.

Its subcellular location is the cell membrane. In terms of biological role, odorant receptor. The sequence is that of Olfactory receptor 10S1 (OR10S1) from Homo sapiens (Human).